The chain runs to 57 residues: Cecropin-A (57 aa).

An N-terminal signal peptide occupies residues 1–21 (IFFFVFACLLALSAVSAAPEP).

It belongs to the cecropin family.

It localises to the secreted. In terms of biological role, cecropins have lytic and antibacterial activity against several Gram-positive and Gram-negative bacteria. This is Cecropin-A (CECA) from Spodoptera litura (Asian cotton leafworm).